The sequence spans 493 residues: ATP synthase subunit beta, chloroplastic (493 aa).

170–177 (GGAGVGKT) lines the ATP pocket.

It belongs to the ATPase alpha/beta chains family. In terms of assembly, F-type ATPases have 2 components, CF(1) - the catalytic core - and CF(0) - the membrane proton channel. CF(1) has five subunits: alpha(3), beta(3), gamma(1), delta(1), epsilon(1). CF(0) has four main subunits: a(1), b(1), b'(1) and c(9-12).

It localises to the plastid. The protein resides in the chloroplast thylakoid membrane. The catalysed reaction is ATP + H2O + 4 H(+)(in) = ADP + phosphate + 5 H(+)(out). Functionally, produces ATP from ADP in the presence of a proton gradient across the membrane. The catalytic sites are hosted primarily by the beta subunits. This chain is ATP synthase subunit beta, chloroplastic, found in Lachenalia pusilla (Cape cowslips).